Consider the following 87-residue polypeptide: Keratin-associated protein 19-3 (87 aa).

Positions 9-82 are 23 X 2 AA repeats of G-[YCGS]; sequence GGLGYGYGSF…RRPSCCGGYG (74 aa).

The protein belongs to the KRTAP type 19 family. As to quaternary structure, interacts with hair keratins. In terms of tissue distribution, strong expression in narrowly defined pattern restricted to the lower and middle cortical regions of the hair shaft in both developing and cycling hair. During hair follicle regression (catagen), expression levels decrease until expression is no longer detectable in follicles at resting stage (telogen).

Functionally, in the hair cortex, hair keratin intermediate filaments are embedded in an interfilamentous matrix, consisting of hair keratin-associated proteins (KRTAP), which are essential for the formation of a rigid and resistant hair shaft through their extensive disulfide bond cross-linking with abundant cysteine residues of hair keratins. The matrix proteins include the high-sulfur and high-glycine-tyrosine keratins. In Mus musculus (Mouse), this protein is Keratin-associated protein 19-3 (Krtap19-3).